We begin with the raw amino-acid sequence, 410 residues long: Chitin deacetylase 3 (410 aa).

The signal sequence occupies residues methionine 1–alanine 18. Positions alanine 19 to arginine 39 are excised as a propeptide. Residues asparagine 61 and asparagine 80 are each glycosylated (N-linked (GlcNAc...) asparagine). The NodB homology domain maps to lysine 124–lysine 314. The Proton acceptor role is filled by aspartate 131. Residue aspartate 131 coordinates acetate. Aspartate 132 serves as a coordination point for Co(2+). N-linked (GlcNAc...) asparagine glycosylation is present at asparagine 149. The Co(2+) site is built by histidine 183 and histidine 187. Tyrosine 225 is an acetate binding site. A glycan (N-linked (GlcNAc...) asparagine) is linked at asparagine 279. The active-site Proton donor is the histidine 289. Asparagine 293 carries an N-linked (GlcNAc...) asparagine glycan. Residue serine 385 is the site of GPI-anchor amidated serine attachment. Residues serine 386 to valine 410 constitute a propeptide, removed in mature form.

This sequence belongs to the polysaccharide deacetylase family. It depends on Co(2+) as a cofactor.

It localises to the cell membrane. The enzyme catalyses [(1-&gt;4)-N-acetyl-beta-D-glucosaminyl](n) + n H2O = chitosan + n acetate. Functionally, hydrolyzes the N-acetamido groups of N-acetyl-D-glucosamine residues in chitin to form chitosan and acetate. Chitosan is required to anchor melanin to the cell wall, for maintenance of cell wall integrity, and for proper cytokinesis. Chitosan offers an advantage during infection as it is less readily detected than chitin by host immunosurveillance mechanisms. This chain is Chitin deacetylase 3, found in Cryptococcus neoformans var. neoformans serotype D (strain B-3501A) (Filobasidiella neoformans).